A 38-amino-acid chain; its full sequence is Large ribosomal subunit protein bL36 (38 aa).

Belongs to the bacterial ribosomal protein bL36 family.

The chain is Large ribosomal subunit protein bL36 from Ralstonia nicotianae (strain ATCC BAA-1114 / GMI1000) (Ralstonia solanacearum).